The sequence spans 257 residues: Peptide methionine sulfoxide reductase (257 aa).

The tract at residues L61 to P88 is disordered. S244 carries the post-translational modification Phosphoserine.

The protein belongs to the MsrA Met sulfoxide reductase family.

It catalyses the reaction L-methionyl-[protein] + [thioredoxin]-disulfide + H2O = L-methionyl-(S)-S-oxide-[protein] + [thioredoxin]-dithiol. It carries out the reaction [thioredoxin]-disulfide + L-methionine + H2O = L-methionine (S)-S-oxide + [thioredoxin]-dithiol. Functionally, has an important function as a repair enzyme for proteins that have been inactivated by oxidation. Catalyzes the reversible oxidation-reduction of methionine sulfoxide in proteins to methionine. The sequence is that of Peptide methionine sulfoxide reductase (PMSR) from Brassica napus (Rape).